The chain runs to 156 residues: MSRRHRAEKRDVIPDAKYGDVILAKFMNSLMYHGKKSAAETIIYGAFDQMQQKASVDPLRTFHEALENVMPALEVRSRRVGGATYQVPVEVRPDRRRALAIRWIIAAARARNETTMVARLSGELLDAANNRGSAVKKREDTHRMAEANRAFSHYRW.

It belongs to the universal ribosomal protein uS7 family. As to quaternary structure, part of the 30S ribosomal subunit. Contacts proteins S9 and S11.

One of the primary rRNA binding proteins, it binds directly to 16S rRNA where it nucleates assembly of the head domain of the 30S subunit. Is located at the subunit interface close to the decoding center, probably blocks exit of the E-site tRNA. This Parvibaculum lavamentivorans (strain DS-1 / DSM 13023 / NCIMB 13966) protein is Small ribosomal subunit protein uS7.